Reading from the N-terminus, the 113-residue chain is U11-theraphotoxin-Hhn1a (113 aa).

The first 21 residues, 1-21, serve as a signal peptide directing secretion; that stretch reads MNTVRVTFLLVFVLPVSLGQA. Residues 22–74 constitute a propeptide that is removed on maturation; it reads DKDENRMEMQEKTEQGKSYLDFAENLLLQKLEELEAKLLEEDSEESRNSRQKR. Residues 60-69 are compositionally biased toward basic and acidic residues; that stretch reads LEEDSEESRN. Positions 60-83 are disordered; sequence LEEDSEESRNSRQKRCIGEGVPCD. Disulfide bonds link C75/C90, C82/C95, and C89/C110.

Belongs to the neurotoxin 14 (magi-1) family. 01 (HNTX-16) subfamily. As to expression, expressed by the venom gland.

It is found in the secreted. Functionally, probable ion channel inhibitor. The polypeptide is U11-theraphotoxin-Hhn1a (Cyriopagopus hainanus (Chinese bird spider)).